We begin with the raw amino-acid sequence, 205 residues long: N-(5'-phosphoribosyl)anthranilate isomerase (205 aa).

It belongs to the TrpF family.

It catalyses the reaction N-(5-phospho-beta-D-ribosyl)anthranilate = 1-(2-carboxyphenylamino)-1-deoxy-D-ribulose 5-phosphate. It participates in amino-acid biosynthesis; L-tryptophan biosynthesis; L-tryptophan from chorismate: step 3/5. The polypeptide is N-(5'-phosphoribosyl)anthranilate isomerase (Phocaeicola vulgatus (strain ATCC 8482 / DSM 1447 / JCM 5826 / CCUG 4940 / NBRC 14291 / NCTC 11154) (Bacteroides vulgatus)).